Consider the following 230-residue polypeptide: Demethylmenaquinone methyltransferase (230 aa).

Residues Thr-62, Asp-80, 100–101 (DA), and Ser-117 each bind S-adenosyl-L-methionine.

This sequence belongs to the class I-like SAM-binding methyltransferase superfamily. MenG/UbiE family.

It catalyses the reaction a 2-demethylmenaquinol + S-adenosyl-L-methionine = a menaquinol + S-adenosyl-L-homocysteine + H(+). It participates in quinol/quinone metabolism; menaquinone biosynthesis; menaquinol from 1,4-dihydroxy-2-naphthoate: step 2/2. Functionally, methyltransferase required for the conversion of demethylmenaquinol (DMKH2) to menaquinol (MKH2). This Mycobacterium sp. (strain KMS) protein is Demethylmenaquinone methyltransferase.